Consider the following 140-residue polypeptide: Nucleoside diphosphate kinase (140 aa).

ATP is bound by residues lysine 11, phenylalanine 59, arginine 87, threonine 93, arginine 104, and asparagine 114. The Pros-phosphohistidine intermediate role is filled by histidine 117.

Belongs to the NDK family. In terms of assembly, homotetramer. The cofactor is Mg(2+).

It is found in the cytoplasm. The catalysed reaction is a 2'-deoxyribonucleoside 5'-diphosphate + ATP = a 2'-deoxyribonucleoside 5'-triphosphate + ADP. It carries out the reaction a ribonucleoside 5'-diphosphate + ATP = a ribonucleoside 5'-triphosphate + ADP. Functionally, major role in the synthesis of nucleoside triphosphates other than ATP. The ATP gamma phosphate is transferred to the NDP beta phosphate via a ping-pong mechanism, using a phosphorylated active-site intermediate. This chain is Nucleoside diphosphate kinase, found in Dinoroseobacter shibae (strain DSM 16493 / NCIMB 14021 / DFL 12).